The chain runs to 162 residues: E3 ubiquitin-protein ligase LAP (162 aa).

At 1 to 78 (MEGSDNTNTH…RWKCSFMYCN (78 aa)) the chain is on the cytoplasmic side. Residues 3-61 (GSDNTNTHCWICKDEYNVSTNFCNCKNEFKIVHKNCLEEWINFSHNTKCKICNGKYNIK) form an RING-CH-type zinc finger. Residues C11, C14, C25, C27, H35, C38, C51, and C54 each coordinate Zn(2+). A helical membrane pass occupies residues 79–99 (VPAICVSLICLLLLPLTILLV). Topologically, residues 100–121 (KFNLKSMLENIENRDLIALISA) are lumenal. The helical transmembrane segment at 122–142 (MAYSLPCVVGFITVVHILIAL) threads the bilayer. The Cytoplasmic portion of the chain corresponds to 143–162 (YDYYLAAKSDNTTYQVYEYI).

It belongs to the poxviridae LAP protein family.

It localises to the host membrane. The protein resides in the host Golgi apparatus. Its subcellular location is the host trans-Golgi network membrane. The protein localises to the host early endosome membrane. The enzyme catalyses S-ubiquitinyl-[E2 ubiquitin-conjugating enzyme]-L-cysteine + [acceptor protein]-L-lysine = [E2 ubiquitin-conjugating enzyme]-L-cysteine + N(6)-ubiquitinyl-[acceptor protein]-L-lysine.. Functionally, E3 ubiquitin-protein ligase which promotes ubiquitination and subsequent degradation of host MHC-I and CD4 molecules, presumably to prevent lysis of infected cells by cytotoxic T-lymphocytes and NK cell. Binds target molecules through transmembrane interaction. The result of this ubiquitination is the enhancement of the endocytosis of the target chain and the delivery to the lysosome, where it is proteolytically destroyed. This Lumpy skin disease virus (LSDV) protein is E3 ubiquitin-protein ligase LAP (LW010).